Here is a 218-residue protein sequence, read N- to C-terminus: Monomethylamine corrinoid protein 1 (218 aa).

The region spanning 1–91 (MANQEIFDKL…ELEKTKVEGE (91 aa)) is the B12-binding N-terminal domain. The region spanning 94-218 (TGLAITFVAE…AAKVALNIMK (125 aa)) is the B12-binding domain. A methylcob(III)alamin-binding site is contributed by histidine 107.

The protein belongs to the methylamine corrinoid protein family. As to quaternary structure, can form a complex with MtmB.

It participates in one-carbon metabolism; methanogenesis from methylamine. In terms of biological role, acts as a methyl group carrier between MtmB and MtbA. In Methanosarcina acetivorans (strain ATCC 35395 / DSM 2834 / JCM 12185 / C2A), this protein is Monomethylamine corrinoid protein 1 (mtmC1).